Here is a 44-residue protein sequence, read N- to C-terminus: Protein PsbN (44 aa).

Residues 7–29 traverse the membrane as a helical segment; that stretch reads FFTTFLGCLLLSITGYSIYVGFG.

The protein belongs to the PsbN family.

The protein localises to the plastid. It is found in the chloroplast thylakoid membrane. May play a role in photosystem I and II biogenesis. The protein is Protein PsbN of Pleurastrum terricola (Filamentous green alga).